A 266-amino-acid chain; its full sequence is Phosphatidylglycerol--prolipoprotein diacylglyceryl transferase (266 aa).

A run of 7 helical transmembrane segments spans residues 10–30, 56–76, 92–112, 120–140, 171–191, 199–219, and 233–253; these read VALAIGPLKIHWYGLMYLIGI, LVFWVACGVILGGRLGYVLFY, WKGGMSFHGGLLGVMLAVWWF, FFQLMDFIAPLVPIGLGAGRI, PSQLYQFALEGVALFVILWLF, ASVSGLFVLCYGIFRFVVEFV, and WLTMGQVLCVPMVLAGIALMV. Residue R139 coordinates a 1,2-diacyl-sn-glycero-3-phospho-(1'-sn-glycerol).

This sequence belongs to the Lgt family.

The protein localises to the cell inner membrane. It carries out the reaction L-cysteinyl-[prolipoprotein] + a 1,2-diacyl-sn-glycero-3-phospho-(1'-sn-glycerol) = an S-1,2-diacyl-sn-glyceryl-L-cysteinyl-[prolipoprotein] + sn-glycerol 1-phosphate + H(+). The protein operates within protein modification; lipoprotein biosynthesis (diacylglyceryl transfer). Its function is as follows. Catalyzes the transfer of the diacylglyceryl group from phosphatidylglycerol to the sulfhydryl group of the N-terminal cysteine of a prolipoprotein, the first step in the formation of mature lipoproteins. This chain is Phosphatidylglycerol--prolipoprotein diacylglyceryl transferase, found in Pseudomonas paraeruginosa (strain DSM 24068 / PA7) (Pseudomonas aeruginosa (strain PA7)).